Here is a 602-residue protein sequence, read N- to C-terminus: Probable HECT-type ubiquitin ligase-interacting protein creD (602 aa).

Disordered stretches follow at residues 375 to 398 (EVDPSGYRTPGPGSGPGTPFGALS) and 457 to 499 (TADY…MATP). The span at 463–475 (PSSGSNSHSPASP) shows a compositional bias: low complexity. Residues 477-492 (LSRRPSDEGYRDHDHI) show a composition bias toward basic and acidic residues.

Belongs to the arrestin family. As to quaternary structure, interacts with hulA.

In terms of biological role, component of the regulatory network controlling carbon source utilization through ubiquitination and deubiquitination involving creA, creB, creC, creD and acrB. May be involved in signaling by recognizing appropriately phosphorylated substrates via its arrestin domains and then recruit a HECT-type ubiquitin ligase such as hulA, leading to ubiquitination of the substrate, providing a link between ubiquitination and phosphorylation in protein regulation and stability. The polypeptide is Probable HECT-type ubiquitin ligase-interacting protein creD (creD) (Aspergillus clavatus (strain ATCC 1007 / CBS 513.65 / DSM 816 / NCTC 3887 / NRRL 1 / QM 1276 / 107)).